Here is a 330-residue protein sequence, read N- to C-terminus: Complement factor H-related protein 1 (330 aa).

Residues 1–18 form the signal peptide; it reads MWLLVSVILISRISSVGG. Sushi domains lie at 22 to 84, 85 to 142, 145 to 203, 206 to 264, and 273 to 329; these read FCDF…PKCL, RLCF…KCRS, TSCV…QCKD, GKCG…KCLH, and MENY…TCAK. Cystine bridges form between Cys-23/Cys-72, Cys-55/Cys-83, Cys-87/Cys-129, Cys-114/Cys-140, Cys-147/Cys-190, Cys-176/Cys-201, Cys-208/Cys-251, Cys-237/Cys-262, Cys-266/Cys-317, and Cys-300/Cys-327. N-linked (GlcNAc...) asparagine glycosylation is present at Asn-126. An N-linked (GlcNAc...) asparagine glycan is attached at Asn-194.

Head-to-tail homodimer and heterodimer with CFHR2 or CFHR5. As to quaternary structure, (Microbial infection) Interacts with C.albicans GPD2; the interaction is direct and leads to the degradation of C3. N-glycosylated. Two forms are observed; one with a single side chain and the other with two. Expressed by the liver and secreted in plasma.

It localises to the secreted. In terms of biological role, involved in complement regulation. The dimerized forms have avidity for tissue-bound complement fragments and efficiently compete with the physiological complement inhibitor CFH. Can associate with lipoproteins and may play a role in lipid metabolism. This is Complement factor H-related protein 1 (CFHR1) from Homo sapiens (Human).